We begin with the raw amino-acid sequence, 34 residues long: Photosystem II reaction center protein Psb30 (34 aa).

Residues 9 to 29 (QLIATGTIMLAGPAVIVLLAL) traverse the membrane as a helical segment.

The protein belongs to the Psb30/Ycf12 family. PSII is composed of 1 copy each of membrane proteins PsbA, PsbB, PsbC, PsbD, PsbE, PsbF, PsbH, PsbI, PsbJ, PsbK, PsbL, PsbM, PsbT, PsbX, PsbY, PsbZ, Psb30/Ycf12, peripheral proteins of the oxygen-evolving complex and a large number of cofactors. It forms dimeric complexes.

It is found in the plastid. Its subcellular location is the chloroplast thylakoid membrane. In terms of biological role, a core subunit of photosystem II (PSII), probably helps stabilize the reaction center. The sequence is that of Photosystem II reaction center protein Psb30 from Phaeodactylum tricornutum (strain CCAP 1055/1).